Here is a 173-residue protein sequence, read N- to C-terminus: DELTA-actitoxin-Oor1b (173 aa).

The tract at residues 6-25 is N-terminal region; that stretch reads GAALGFNVHQTVLKALGQVS. Phosphocholine contacts are provided by Ser49, Val82, Ser100, Pro102, Tyr128, and Tyr133. The trp-rich region, which is important for the binding to lipid membrane stretch occupies residues 100–115; that stretch reads SVPFDYNLYSNWWDVK.

This sequence belongs to the actinoporin family. Sea anemone subfamily. As to quaternary structure, octamer or nonamer in membranes. Monomer in the soluble state.

The protein resides in the secreted. It is found in the nematocyst. The protein localises to the target cell membrane. Pore-forming protein that forms cations-selective hydrophilic pores of around 1 nm and causes cardiac stimulation and cytolysis. Pore formation is a multi-step process that involves specific recognition of membrane sphingomyelin (but neither cholesterol nor phosphatidylcholine) using aromatic rich region and adjacent phosphocholine (POC) binding site, firm binding to the membrane (mainly driven by hydrophobic interactions) accompanied by the transfer of the N-terminal region to the lipid-water interface and finally pore formation after oligomerization of monomers. Cytolytic effects include red blood cells hemolysis, platelet aggregation and lysis, cytotoxic and cytostatic effects on fibroblasts. Lethality in mammals has been ascribed to severe vasospasm of coronary vessels, cardiac arrhythmia, and inotropic effects. This is DELTA-actitoxin-Oor1b from Oulactis orientalis (Japan anemone).